A 333-amino-acid polypeptide reads, in one-letter code: Syntaxin-4 (333 aa).

Over 1 to 312 (MGKDRLPELL…QHQKKARKKK (312 aa)) the chain is Cytoplasmic. The span at 50-66 (YSVVSQNSHSCSNNNSS) shows a compositional bias: low complexity. Residues 50-81 (YSVVSQNSHSCSNNNSSTEPKDRSSSKMTQYG) form a disordered region. The stretch at 91-116 (YTEIRQQLAQIAANLETMNRMAQTVN) forms a coiled coil. Residues 239–301 (LREMMDRFNE…DKGADELDQA (63 aa)) enclose the t-SNARE coiled-coil homology domain. The helical; Anchor for type IV membrane protein transmembrane segment at 313 to 333 (IMLIVILAAVLLVLLLVGIYL) threads the bilayer.

This sequence belongs to the syntaxin family.

The protein resides in the membrane. Functionally, potentially involved in docking of synaptic vesicles at presynaptic active zones. In Drosophila melanogaster (Fruit fly), this protein is Syntaxin-4.